A 217-amino-acid polypeptide reads, in one-letter code: Transcriptional regulatory protein CutR (217 aa).

The region spanning 2-116 (RVLVVEDEQL…ELIARVRALG (115 aa)) is the Response regulatory domain. Aspartate 51 carries the post-translational modification 4-aspartylphosphate. The ompR/PhoB-type DNA-binding region spans 124–217 (PPVLERAGIK…VTVPGSGYRI (94 aa)).

Its function is as follows. Member of the two-component regulatory system CutS/CutR, involved in the regulation of copper metabolism. CutR suppresses a defective melC1 gene, encoding a putative copper-transfer gene, probably by altering copper metabolism. The polypeptide is Transcriptional regulatory protein CutR (cutR) (Streptomyces lividans).